The primary structure comprises 316 residues: Cytochrome c biogenesis protein CcsA (316 aa).

Transmembrane regions (helical) follow at residues 15–35 (FSIC…TTIL), 44–64 (GIIT…IYSG), 71–91 (LYES…VAYL), 142–162 (MILS…LLVI), 220–240 (VISL…VWAN), 247–267 (WSWD…AIYL), and 281–301 (AIVA…VNLL).

This sequence belongs to the CcmF/CycK/Ccl1/NrfE/CcsA family. May interact with Ccs1.

It is found in the plastid. The protein localises to the chloroplast thylakoid membrane. Required during biogenesis of c-type cytochromes (cytochrome c6 and cytochrome f) at the step of heme attachment. The chain is Cytochrome c biogenesis protein CcsA from Trachelium caeruleum (Blue throatwort).